The sequence spans 98 residues: MAAEPLTELEESIETVVTTFFTFARQEGRKDSLSVNEFKELVTQQLPHLLKDVGSLDEKMKSLDVNQDSELKFNEYWRLIGELAKEIRKKKDLKIRKK.

One can recognise an EF-hand domain in the interval 18-53; sequence TTFFTFARQEGRKDSLSVNEFKELVTQQLPHLLKDV. Positions 32, 37, 64, 66, 68, 70, and 75 each coordinate Ca(2+). A Phosphoserine modification is found at Ser32.

The protein belongs to the S-100 family. Homodimer. Part of a copper-dependent multiprotein complex containing S100A13, FGF1 and SYT1. Interacts with FGF1 and SYT1. Interacts with IL1A. In terms of tissue distribution, expressed in heart and skeletal muscle.

It localises to the cytoplasm. The protein resides in the secreted. In terms of biological role, plays a role in the export of proteins that lack a signal peptide and are secreted by an alternative pathway. Binds two calcium ions per subunit. Binds one copper ion. Binding of one copper ion does not interfere with calcium binding. Required for the copper-dependent stress-induced export of IL1A and FGF1. The calcium-free protein binds to lipid vesicles containing phosphatidylserine, but not to vesicles containing phosphatidylcholine. This chain is Protein S100-A13 (S100A13), found in Homo sapiens (Human).